The sequence spans 276 residues: Diaminopimelate epimerase (276 aa).

Residues Asn-13, Gln-46, and Asn-66 each contribute to the substrate site. The active-site Proton donor is Cys-75. Substrate is bound by residues 76–77 (GN), Asn-159, Asn-192, and 210–211 (ER). Cys-219 functions as the Proton acceptor in the catalytic mechanism. 220–221 (GT) provides a ligand contact to substrate.

This sequence belongs to the diaminopimelate epimerase family. In terms of assembly, homodimer.

The protein localises to the cytoplasm. The catalysed reaction is (2S,6S)-2,6-diaminopimelate = meso-2,6-diaminopimelate. It functions in the pathway amino-acid biosynthesis; L-lysine biosynthesis via DAP pathway; DL-2,6-diaminopimelate from LL-2,6-diaminopimelate: step 1/1. Its function is as follows. Catalyzes the stereoinversion of LL-2,6-diaminopimelate (L,L-DAP) to meso-diaminopimelate (meso-DAP), a precursor of L-lysine and an essential component of the bacterial peptidoglycan. The protein is Diaminopimelate epimerase of Tolumonas auensis (strain DSM 9187 / NBRC 110442 / TA 4).